The primary structure comprises 327 residues: Expansin-B7 (327 aa).

Residues 1–30 (MAGRSRRRSFWSVGVAAALLCLLAAHGCSA) form the signal peptide. Positions 30-88 (AKHHKPKPTPGGISGNASSSSSNSSTPSIPPPVAPTPTAPTPPIPSPGTGSSNGSSGGG) are disordered. The span at 44 to 56 (GNASSSSSNSSTP) shows a compositional bias: low complexity. N45 and N52 each carry an N-linked (GlcNAc...) asparagine glycan. The segment covering 57–75 (SIPPPVAPTPTAPTPPIPS) has biased composition (pro residues). N82 is a glycosylation site (N-linked (GlcNAc...) asparagine). Positions 112–218 (GGACGFKNVN…RRVPCQYPGL (107 aa)) constitute an Expansin-like EG45 domain. 3 disulfides stabilise this stretch: C115–C143, C146–C213, and C151–C157. Positions 231 to 322 (VYMAILVEYE…DWQPNTVYSS (92 aa)) constitute an Expansin-like CBD domain. A glycan (N-linked (GlcNAc...) asparagine) is linked at N298.

This sequence belongs to the expansin family. Expansin B subfamily.

The protein resides in the secreted. Its subcellular location is the cell wall. It is found in the membrane. May cause loosening and extension of plant cell walls by disrupting non-covalent bonding between cellulose microfibrils and matrix glucans. No enzymatic activity has been found. May be required for rapid internodal elongation in deepwater rice during submergence. In Oryza sativa subsp. japonica (Rice), this protein is Expansin-B7 (EXPB7).